A 317-amino-acid polypeptide reads, in one-letter code: 4-hydroxy-3-methylbut-2-enyl diphosphate reductase (317 aa).

Residue C12 coordinates [4Fe-4S] cluster. 2 residues coordinate (2E)-4-hydroxy-3-methylbut-2-enyl diphosphate: H41 and H74. Residues H41 and H74 each contribute to the dimethylallyl diphosphate site. Residues H41 and H74 each contribute to the isopentenyl diphosphate site. C97 contributes to the [4Fe-4S] cluster binding site. H125 is a (2E)-4-hydroxy-3-methylbut-2-enyl diphosphate binding site. H125 is a binding site for dimethylallyl diphosphate. H125 is a binding site for isopentenyl diphosphate. The active-site Proton donor is E127. Position 168 (T168) interacts with (2E)-4-hydroxy-3-methylbut-2-enyl diphosphate. [4Fe-4S] cluster is bound at residue C198. (2E)-4-hydroxy-3-methylbut-2-enyl diphosphate contacts are provided by S226, S227, N228, and S270. Dimethylallyl diphosphate is bound by residues S226, S227, N228, and S270. S226, S227, N228, and S270 together coordinate isopentenyl diphosphate.

It belongs to the IspH family. As to quaternary structure, homodimer. [4Fe-4S] cluster serves as cofactor.

The enzyme catalyses isopentenyl diphosphate + 2 oxidized [2Fe-2S]-[ferredoxin] + H2O = (2E)-4-hydroxy-3-methylbut-2-enyl diphosphate + 2 reduced [2Fe-2S]-[ferredoxin] + 2 H(+). It carries out the reaction dimethylallyl diphosphate + 2 oxidized [2Fe-2S]-[ferredoxin] + H2O = (2E)-4-hydroxy-3-methylbut-2-enyl diphosphate + 2 reduced [2Fe-2S]-[ferredoxin] + 2 H(+). The protein operates within isoprenoid biosynthesis; dimethylallyl diphosphate biosynthesis; dimethylallyl diphosphate from (2E)-4-hydroxy-3-methylbutenyl diphosphate: step 1/1. Its pathway is isoprenoid biosynthesis; isopentenyl diphosphate biosynthesis via DXP pathway; isopentenyl diphosphate from 1-deoxy-D-xylulose 5-phosphate: step 6/6. Catalyzes the conversion of 1-hydroxy-2-methyl-2-(E)-butenyl 4-diphosphate (HMBPP) into a mixture of isopentenyl diphosphate (IPP) and dimethylallyl diphosphate (DMAPP). Acts in the terminal step of the DOXP/MEP pathway for isoprenoid precursor biosynthesis. This chain is 4-hydroxy-3-methylbut-2-enyl diphosphate reductase, found in Yersinia pseudotuberculosis serotype O:1b (strain IP 31758).